A 418-amino-acid chain; its full sequence is Staphyloferrin B transporter (418 aa).

10 helical membrane passes run 19 to 39 (FIAIAGLTVLVPLLPIYMASL), 49 to 69 (LWSGIAIAAPAVTTMIASPIW), 88 to 108 (GLAVCLFLMALCTTPLQFVLV), 163 to 183 (ILGFSALLMSIAVITFIVCIF), 222 to 242 (FIIVGVLANFAMYGMLTALSP), 257 to 277 (VIGFLQSAFWTASILSAPLWG), 287 to 307 (SVYIFATIACGCSAILQGLAT), 317 to 337 (ILQGLTYSALIQSVMFVVVNA), 353 to 373 (MLVVGQIIGSLSGAAITSYTT), and 377 to 397 (TFIVMGVVFAVSSLFLICSTI).

Belongs to the major facilitator superfamily.

It localises to the cell membrane. Functionally, involved in staphyloferrin B secretion. This Staphylococcus aureus (strain NCTC 8325 / PS 47) protein is Staphyloferrin B transporter.